A 504-amino-acid polypeptide reads, in one-letter code: Peptidyl-prolyl cis-trans isomerase CYP57 (504 aa).

An N-acetylserine modification is found at Ser-2. The region spanning 16-167 (IVNTTHGPID…DPAPKILSVE (152 aa)) is the PPIase cyclophilin-type domain. Positions 204–274 (NLLSFGEEAE…AKKEAAQKDK (71 aa)) form a coiled coil. 3 stretches are compositionally biased toward basic and acidic residues: residues 237–275 (RLLKAEASDKERNASESKEVLSVREALNAKKEAAQKDKS), 344–354 (EDEKPRMEKLS), and 364–374 (AKAEHMEKGDT). Disordered regions lie at residues 237–374 (RLLK…KGDT), 416–441 (AKPFTSSNEPVVLTSSSEPVDNKEED), and 482–504 (EKFNRMQAKQKRREREWSGKSLA). Residues 416-434 (AKPFTSSNEPVVLTSSSEP) are compositionally biased toward polar residues. Positions 494-504 (REREWSGKSLA) are enriched in basic and acidic residues.

It belongs to the cyclophilin-type PPIase family. Ubiquitous.

Its subcellular location is the nucleus. The protein resides in the cytoplasm. The catalysed reaction is [protein]-peptidylproline (omega=180) = [protein]-peptidylproline (omega=0). PPIases accelerate the folding of proteins. It catalyzes the cis-trans isomerization of proline imidic peptide bonds in oligopeptides. Involved in plant response to pathogen infection by increasing PAD4 expression in absence of EDS1 up-regulation. In Arabidopsis thaliana (Mouse-ear cress), this protein is Peptidyl-prolyl cis-trans isomerase CYP57 (CYP57).